The chain runs to 355 residues: Putative GPI-anchor transamidase (355 aa).

Positions 1-24 are cleaved as a signal peptide; sequence MFNIMLVKFVVIFALILASCRVEA. Residues His165 and Cys207 contribute to the active site.

This sequence belongs to the peptidase C13 family.

Its pathway is glycolipid biosynthesis; glycosylphosphatidylinositol-anchor biosynthesis. Its function is as follows. Mediates GPI anchoring in the endoplasmic reticulum, by replacing a protein's C-terminal GPI attachment signal peptide with a pre-assembled GPI. During this transamidation reaction, the GPI transamidase forms a carbonyl intermediate with the substrate protein. This is Putative GPI-anchor transamidase from Drosophila melanogaster (Fruit fly).